A 111-amino-acid polypeptide reads, in one-letter code: Carboxysome shell protein CcmK1 (111 aa).

The BMC domain maps to 4–90 (AVGMIETLGF…PHENLEYVLP (87 aa)).

This sequence belongs to the bacterial microcompartments protein family. CcmK subfamily. In terms of assembly, homohexamer. Interacts with full-length CcmM. Forms mixed heterohexamers of all possible stoichiometries with CcmK2, which might form dodecamers. Only very weak interactions with CcmK3 and CcmK4 were seen. Interacts with CcmN and CcmO in the carboxysome.

The protein localises to the carboxysome. Its function is as follows. One of the shell proteins of the carboxysome, a polyhedral inclusion where RuBisCO (ribulose bisphosphate carboxylase, rbcL-rbcS) is sequestered. Assembles into hexamers which make sheets that form the facets of the polyhedral carboxysome. The hexamer central pore probably regulates metabolite flux. Probably the major shell protein of the carboxysome, a polyhedral inclusion where RuBisCO (ribulose bisphosphate carboxylase, rbcL-rbcS) is sequestered. The central pore probably regulates metabolite flux. Hexamers make sheets that form the facets of the carboxysome. The chain is Carboxysome shell protein CcmK1 from Synechocystis sp. (strain ATCC 27184 / PCC 6803 / Kazusa).